A 169-amino-acid chain; its full sequence is Sulfopyruvate decarboxylase subunit alpha (169 aa).

It belongs to the ComD family. Heterododecamer composed of 6 subunits alpha and 6 subunits beta.

The catalysed reaction is 3-sulfopyruvate + H(+) = sulfoacetaldehyde + CO2. The protein operates within cofactor biosynthesis; coenzyme M biosynthesis; sulfoacetaldehyde from phosphoenolpyruvate and sulfite: step 4/4. Its activity is regulated as follows. Inhibited by oxygen when heated in air at 80 degrees Celsius. The enzyme is reactivated by addition of dithionite. Involved in the biosynthesis of the coenzyme M (2-mercaptoethanesulfonic acid). Catalyzes the decarboxylation of sulfopyruvate to sulfoacetaldehyde. This is Sulfopyruvate decarboxylase subunit alpha from Methanocaldococcus jannaschii (strain ATCC 43067 / DSM 2661 / JAL-1 / JCM 10045 / NBRC 100440) (Methanococcus jannaschii).